The primary structure comprises 200 residues: Ribonuclease HII (200 aa).

Residues 14–200 (ERVAGLDEAG…HRQSFTLFRD (187 aa)) form the RNase H type-2 domain. A divalent metal cation-binding residues include Asp20, Glu21, and Asp112.

Belongs to the RNase HII family. Mn(2+) serves as cofactor. The cofactor is Mg(2+).

It is found in the cytoplasm. It catalyses the reaction Endonucleolytic cleavage to 5'-phosphomonoester.. Endonuclease that specifically degrades the RNA of RNA-DNA hybrids. The protein is Ribonuclease HII of Salinibacter ruber (strain DSM 13855 / M31).